The following is a 220-amino-acid chain: Probable septum site-determining protein MinC (220 aa).

Belongs to the MinC family. In terms of assembly, interacts with MinD and FtsZ.

In terms of biological role, cell division inhibitor that blocks the formation of polar Z ring septums. Rapidly oscillates between the poles of the cell to destabilize FtsZ filaments that have formed before they mature into polar Z rings. Prevents FtsZ polymerization. The protein is Probable septum site-determining protein MinC of Vibrio campbellii (strain ATCC BAA-1116).